A 363-amino-acid chain; its full sequence is Nicotinamide adenine dinucleotide transporter 2, mitochondrial (363 aa).

Solcar repeat units follow at residues 15–107 (REVA…LKDV), 115–203 (LSIG…IKQY), and 215–305 (LSPG…MLRF). 6 helical membrane-spanning segments follow: residues 21–41 (AGAGATAGAIAATFVCPLDVI), 82–102 (GLSPTIIALLPNWAVYFSVYG), 121–141 (MIAAAGAGAATSIATNPLWVV), 176–196 (LYSGILPSLAGVSHVAIQFPA), 215–235 (LSPGNVAIASSIAKVIASILT), and 277–299 (LYRGCATNLLRTTPSAVITFTTY). The segment at 313-363 (ETNRSDDRRREEERKNLVSRRGEEEDKDLGLRESQTQSNKISTPHIPLGSK) is disordered. Over residues 315–343 (NRSDDRRREEERKNLVSRRGEEEDKDLGL) the composition is skewed to basic and acidic residues. Residues 345–354 (ESQTQSNKIS) are compositionally biased toward polar residues.

It belongs to the mitochondrial carrier (TC 2.A.29) family. In terms of tissue distribution, highly expressed in young meristematic shoot area, vascular bundles of leaves, developing siliques including the funiculi, petal veins, developing pollen and central cylinder of roots.

It localises to the mitochondrion membrane. Its activity is regulated as follows. Inhibited by pyridoxal 5'-phosphate, bathophenanthroline, tannic acid, mersalyl, mercuric chloride, p-hydroxymercuribenzoate, p-hydroxymercuribenzoate sulfonate, bromocresol purple and N-ethylmaleimide. Mediates the NAD(+) import into chloroplast. Favors the NAD(+)(in)/ADP or AMP(out) antiport exchange, but is also able to catalyze a low unidirectional transport (uniport) of NAD(+). Transports NAD(+), nicotinic acid adenine dinucleotide, nicotinamide mononucleotide, nicotinic acid mononucleotide, FAD, FMN, TTP, TDP, TMP, UTP, UDP, UMP, CTP, CDP, CMP, GTP, GDP, GMP, 3'-AMP, ATP, ADP and AMP, has low transport activity with cAMP, NADH and alpha-NAD(+), and has no activity with NADP(+), NADPH, nicotinamide, nicotinic acid, adenosine, thiamine mono- or diphosphate, inorganic phosphate, CoA, folate, NaCl, malate, malonate, citrate, fumarate, aspartate, glutamate, S-adenosylmethionine, lysine, arginine, and ornithine. The polypeptide is Nicotinamide adenine dinucleotide transporter 2, mitochondrial (NDT2) (Arabidopsis thaliana (Mouse-ear cress)).